The chain runs to 416 residues: Gamma-glutamyl phosphate reductase (416 aa).

This sequence belongs to the gamma-glutamyl phosphate reductase family.

Its subcellular location is the cytoplasm. It catalyses the reaction L-glutamate 5-semialdehyde + phosphate + NADP(+) = L-glutamyl 5-phosphate + NADPH + H(+). It functions in the pathway amino-acid biosynthesis; L-proline biosynthesis; L-glutamate 5-semialdehyde from L-glutamate: step 2/2. Functionally, catalyzes the NADPH-dependent reduction of L-glutamate 5-phosphate into L-glutamate 5-semialdehyde and phosphate. The product spontaneously undergoes cyclization to form 1-pyrroline-5-carboxylate. The chain is Gamma-glutamyl phosphate reductase from Salmonella schwarzengrund (strain CVM19633).